A 574-amino-acid chain; its full sequence is Frizzled and smoothened-like protein G (574 aa).

The first 19 residues, 1–19, serve as a signal peptide directing secretion; the sequence is MKSIIFITFFIFFLKKLNG. Residues 20 to 246 are Extracellular-facing; it reads LPNGYGVGLV…EKWNQIENLS (227 aa). In terms of domain architecture, FZ spans 30–181; it reads DPNGQCMNYI…GLYEVPCFNP (152 aa). Disulfide bonds link Cys-35–Cys-109, Cys-48–Cys-102, Cys-91–Cys-138, and Cys-127–Cys-178. 6 N-linked (GlcNAc...) asparagine glycosylation sites follow: Asn-119, Asn-161, Asn-187, Asn-206, Asn-233, and Asn-244. A helical membrane pass occupies residues 247–267; the sequence is KVLSTISFVCSIYNILSFGIL. Residues 268–273 are Cytoplasmic-facing; that stretch reads KKKKTK. A helical membrane pass occupies residues 274–294; that stretch reads YTICISALSASVALINLGDII. The Extracellular portion of the chain corresponds to 295-324; it reads KIGVGYEKVLCPEPGRFATQVDDPLCGLTA. A helical transmembrane segment spans residues 325–345; the sequence is ALFHVGICSTVLWTTTMAIYL. The Cytoplasmic segment spans residues 346–358; it reads YSAIKNIKLFKFR. The helical transmembrane segment at 359 to 379 threads the bilayer; sequence YFIIFNTGFSLTSLIIAASAS. The Extracellular segment spans residues 380-401; it reads KFEAGTGSIECWIRDRWYSICL. A helical transmembrane segment spans residues 402–422; sequence FWLPCGICLLIGTICIASVIV. The Cytoplasmic portion of the chain corresponds to 423–445; that stretch reads EIYKVSKNIKLSESETIMRQIKP. Residues 446–466 form a helical membrane-spanning segment; that stretch reads IISVILVSGSFTYLFIIFFDI. Residues 467–502 lie on the Extracellular side of the membrane; sequence ERNFGGYRSAVTDYVLCLLNSTDNGIECHTSGPSYN. An N-linked (GlcNAc...) asparagine glycan is attached at Asn-486. Residues 503–523 traverse the membrane as a helical segment; that stretch reads PYFMFYFFMRFFGILFFLIYG. Residues 524–574 are Cytoplasmic-facing; that stretch reads TSKNARDSWYELFIKIKVSLSETSSTISNNSGGGSSQQKQQQQNEIKLEKI. Over residues 550 to 568 the composition is skewed to low complexity; that stretch reads ISNNSGGGSSQQKQQQQNE. The tract at residues 550–574 is disordered; the sequence is ISNNSGGGSSQQKQQQQNEIKLEKI.

Belongs to the G-protein coupled receptor Fz/Smo family.

It is found in the membrane. In Dictyostelium discoideum (Social amoeba), this protein is Frizzled and smoothened-like protein G (fslG).